Reading from the N-terminus, the 440-residue chain is MFPGSGRKTYRQQAPPPGPPNGYQYGPPPGAQGQYPPPQGYPPQGYPPQGYPPQGYAPQGYPPQGYAPQGYAPQGYQQQGGQQQGGQQQGGQQQGGQRQTYATQEAQNFGQGVGNPHPTGPPPSNPQGFGQNSGMTFQYSNCNGKKKALLVGINYTGSKNQLRGCINDVKNMSNFLNQHFGYSYDDMVILTDDQNQRARIPTKENIIRAMQWLVKDARPNDSLVFHYSGHGGVTKDLVGDEESGMDDVIYPLDFEVNGHIIDDIMHDIMVKPLPQGCRLTALYDSCHSGTALDLPYVYSTKGVVKEPNLLKDAGTGAFNALLSYETGNISGAISSLSGIVKKISNSASTNRDQVIRMKASPADVISISGCKDDQTSADAREGGQSTGAMSWSFITTMNQMPNQSYLSLLNNMRTLLKSKYSQKPQLSCSHPQDMNLKFIM.

Positions 1–134 (MFPGSGRKTY…NPQGFGQNSG (134 aa)) are disordered. The span at 14–51 (APPPGPPNGYQYGPPPGAQGQYPPPQGYPPQGYPPQGY) shows a compositional bias: pro residues. Residues 52 to 81 (PPQGYAPQGYPPQGYAPQGYAPQGYQQQGG) show a composition bias toward low complexity. Positions 82 to 94 (QQQGGQQQGGQQQ) are enriched in gly residues. The span at 98-110 (RQTYATQEAQNFG) shows a compositional bias: polar residues. Active-site residues include histidine 230 and cysteine 286.

It belongs to the peptidase C14B family.

Its function is as follows. Involved in cell death (apoptosis). This is Metacaspase-1 (MCA1) from Debaryomyces hansenii (strain ATCC 36239 / CBS 767 / BCRC 21394 / JCM 1990 / NBRC 0083 / IGC 2968) (Yeast).